Reading from the N-terminus, the 190-residue chain is Peptidyl-tRNA hydrolase (190 aa).

Tyr-14 contributes to the tRNA binding site. The active-site Proton acceptor is the His-19. Tyr-64, Asn-66, and Asn-112 together coordinate tRNA.

This sequence belongs to the PTH family. In terms of assembly, monomer.

The protein resides in the cytoplasm. The enzyme catalyses an N-acyl-L-alpha-aminoacyl-tRNA + H2O = an N-acyl-L-amino acid + a tRNA + H(+). Functionally, hydrolyzes ribosome-free peptidyl-tRNAs (with 1 or more amino acids incorporated), which drop off the ribosome during protein synthesis, or as a result of ribosome stalling. Catalyzes the release of premature peptidyl moieties from peptidyl-tRNA molecules trapped in stalled 50S ribosomal subunits, and thus maintains levels of free tRNAs and 50S ribosomes. This Chlorobium phaeovibrioides (strain DSM 265 / 1930) (Prosthecochloris vibrioformis (strain DSM 265)) protein is Peptidyl-tRNA hydrolase.